The following is a 108-amino-acid chain: Putative septation protein SpoVG (108 aa).

The segment at 84–108 (FEKQSSVETEPVTEENMETAENENE) is disordered. A compositionally biased stretch (acidic residues) spans 94–108 (PVTEENMETAENENE).

It belongs to the SpoVG family.

In terms of biological role, could be involved in septation. The sequence is that of Putative septation protein SpoVG from Finegoldia magna (strain ATCC 29328 / DSM 20472 / WAL 2508) (Peptostreptococcus magnus).